A 352-amino-acid chain; its full sequence is B1 bradykinin receptor (352 aa).

Residues 1–41 (MASWPPLELQSSNQSQLFPQNATACDNAPEAWDLLHRVLPT) are Extracellular-facing. Residues Asn13 and Asn21 are each glycosylated (N-linked (GlcNAc...) asparagine). The helical transmembrane segment at 42–62 (FIISICSFGLLGNLFVLLVFL) threads the bilayer. Residues 63-72 (LPRRRLNVAE) lie on the Cytoplasmic side of the membrane. A helical membrane pass occupies residues 73–93 (IYLANLAASDLVFVLGLPFWA). Over 94-110 (ENIWNQFNWPFGALLCR) the chain is Extracellular. The cysteines at positions 109 and 188 are disulfide-linked. The chain crosses the membrane as a helical span at residues 111 to 131 (VINGIIKANLFISIFLVVAIS). The Cytoplasmic portion of the chain corresponds to 132 to 153 (QDRYCVLVHPMASRRRQRRRQA). A helical membrane pass occupies residues 154-174 (RVTCVLIWVVGGLLSIPTFLL). The Extracellular portion of the chain corresponds to 175 to 206 (RSIQAVPDLNITACILLLPHEAWHFARIVELN). N-linked (GlcNAc...) asparagine glycosylation occurs at Asn184. A helical membrane pass occupies residues 207–227 (ILAFLLPLAAIIFFNYHILAS). Residues 228-250 (LRGREEVSRTRCGGSKDSKTTAL) lie on the Cytoplasmic side of the membrane. Residues 251–271 (ILTLVVAFLVCWAPYHFFAFL) form a helical membrane-spanning segment. The Extracellular portion of the chain corresponds to 272-294 (EFLFQVQAVRGCFWEDFIDLGLQ). Residues 295-315 (LANFLAFTNSSLNPVIYVFVG) form a helical membrane-spanning segment. Residues 316–352 (RLFRTKVWELYKQCTPKSLAPISSSHRKEIFQLFWRN) lie on the Cytoplasmic side of the membrane. Cys329 carries the S-palmitoyl cysteine lipid modification.

Belongs to the G-protein coupled receptor 1 family. Bradykinin receptor subfamily. BDKRB1 sub-subfamily.

The protein localises to the cell membrane. Functionally, this is a receptor for bradykinin. Could be a factor in chronic pain and inflammation. The polypeptide is B1 bradykinin receptor (BDKRB1) (Macaca mulatta (Rhesus macaque)).